A 539-amino-acid polypeptide reads, in one-letter code: Sodium/hydrogen exchanger 9B2 (539 aa).

Over 1-94 (MEDSLFSVDK…ACPPQGCFSL (94 aa)) the chain is Cytoplasmic. The helical transmembrane segment at 95 to 112 (AITNVTMVILIWAVVWSI) threads the bilayer. Residues 113-121 (TGPECLPGG) are Extracellular-facing. Residues 122–141 (NLFGILALLFSAALGGKLIS) traverse the membrane as a helical segment. The Cytoplasmic segment spans residues 142-152 (LIKIPSLPPLP). A helical membrane pass occupies residues 153–169 (PLLGMLLAGFLIRNIPV). The Extracellular segment spans residues 170-179 (ITDQVQIHHK). Residues 180-197 (WSAALRNIALAIILVRAG) traverse the membrane as a helical segment. The Cytoplasmic portion of the chain corresponds to 198–208 (LGLDPKALRKL). The chain crosses the membrane as a helical span at residues 209–235 (KAVCLRLSFGPCVVESCTAAVVSHFIM). Over 236–241 (GFPLTW) the chain is Extracellular. A helical membrane pass occupies residues 242 to 250 (GFMLGFVLG). Residues 251-278 (AVSPAVVVPSMLILQKEGFGVDKGIPTL) are Cytoplasmic-facing. Val-252, Gly-283, Asp-286, and Asp-287 together coordinate Na(+). A helical transmembrane segment spans residues 279–298 (LMAAGSFDDVLAITGFNTCL). At 299-308 (GMAFSSGSTL) the chain is on the extracellular side. Residues 309–332 (NTIVRGVLEVVVGIAAGLLFGFFL) form a helical membrane-spanning segment. The Cytoplasmic segment spans residues 333-347 (HYFPSKDQENLKGKR). A helical membrane pass occupies residues 348–365 (SYLILALSVFAVFGSLYF). The Extracellular portion of the chain corresponds to 366–369 (GFPG). Residues 370-381 (SGGLCTLVMAFL) form a helical membrane-spanning segment. Residues 382–398 (AGIGWSTDKTVVEDIIA) lie on the Cytoplasmic side of the membrane. The helical transmembrane segment at 399–419 (VSWDIFQPLLFGLIGAEISVA) threads the bilayer. Residues 420-425 (SLKPET) are Extracellular-facing. A helical membrane pass occupies residues 426–448 (VGLCTATLIIALIIRICISFLMV). Residues 449–469 (CFSGFSLKEKIFISLAWMPKA) are Cytoplasmic-facing. A helical transmembrane segment spans residues 470 to 481 (TVQAAIGSVALD). The Extracellular segment spans residues 482–494 (TARTLENKQFEDY). The chain crosses the membrane as a helical span at residues 495–517 (GMDVLTVAFLGILVTAPIGALVI). Over 518–539 (GLTGPKMLEKSESRTVTEEGSV) the chain is Cytoplasmic.

Belongs to the monovalent cation:proton antiporter 1 (CPA1) transporter (TC 2.A.36) family. Homodimer; dimerization is essential for SLC9B2 activity. Lipids seem to play a role in the stabilization of the dimerization subdomain.

The protein resides in the cell membrane. It is found in the mitochondrion membrane. The protein localises to the endosome membrane. It localises to the recycling endosome membrane. Its subcellular location is the cytoplasmic vesicle. The protein resides in the secretory vesicle. It is found in the synaptic vesicle membrane. The protein localises to the basolateral cell membrane. It localises to the apical cell membrane. The enzyme catalyses Li(+)(out) + H(+)(in) = Li(+)(in) + H(+)(out). It carries out the reaction Li(+)(in) + Na(+)(out) = Li(+)(out) + Na(+)(in). It catalyses the reaction Na(+)(in) + H(+)(out) = Na(+)(out) + H(+)(in). With respect to regulation, allosterically inhibited by the N-terminal domain. Inhibited by phloretin. Electroneutral Na(+) Li(+)/H(+) antiporter that extrudes Na(+) or Li(+) in exchange for external protons across the membrane. Uses the proton gradient/membrane potential to extrude sodium. Contributes to the regulation of intracellular pH and sodium homeostasis. Also able to mediate Na(+)/Li(+) antiporter activity in kidney. The sequence is that of Sodium/hydrogen exchanger 9B2 (slc9b2) from Xenopus tropicalis (Western clawed frog).